The primary structure comprises 474 residues: Methylenetetrahydrofolate--tRNA-(uracil-5-)-methyltransferase TrmFO (474 aa).

Gly-15 to Gly-20 is an FAD binding site. A disordered region spans residues Pro-453–Ser-474.

This sequence belongs to the MnmG family. TrmFO subfamily. FAD serves as cofactor.

It localises to the cytoplasm. The enzyme catalyses uridine(54) in tRNA + (6R)-5,10-methylene-5,6,7,8-tetrahydrofolate + NADH + H(+) = 5-methyluridine(54) in tRNA + (6S)-5,6,7,8-tetrahydrofolate + NAD(+). The catalysed reaction is uridine(54) in tRNA + (6R)-5,10-methylene-5,6,7,8-tetrahydrofolate + NADPH + H(+) = 5-methyluridine(54) in tRNA + (6S)-5,6,7,8-tetrahydrofolate + NADP(+). Functionally, catalyzes the folate-dependent formation of 5-methyl-uridine at position 54 (M-5-U54) in all tRNAs. This is Methylenetetrahydrofolate--tRNA-(uracil-5-)-methyltransferase TrmFO from Nitratidesulfovibrio vulgaris (strain ATCC 29579 / DSM 644 / CCUG 34227 / NCIMB 8303 / VKM B-1760 / Hildenborough) (Desulfovibrio vulgaris).